A 903-amino-acid polypeptide reads, in one-letter code: Translation initiation factor IF-2 (903 aa).

2 disordered regions span residues 57–171 (EKFK…QRRR) and 267–318 (PTPQ…EAVT). Residues 69–163 (KKEAKEPSEK…SEPQKPKESL (95 aa)) are compositionally biased toward basic and acidic residues. Over residues 267 to 278 (PTPQPMQKTKQP) the composition is skewed to low complexity. Positions 299–308 (RRARKKHKKP) are enriched in basic residues. Positions 402–569 (PRAPVITIMG…IVLLQAEILE (168 aa)) constitute a tr-type G domain. The tract at residues 411–418 (GHVDHGKT) is G1. A GTP-binding site is contributed by 411-418 (GHVDHGKT). Residues 436 to 440 (GITQH) form a G2 region. Positions 457–460 (DTPG) are G3. Residues 457–461 (DTPGH) and 511–514 (NKMD) contribute to the GTP site. The G4 stretch occupies residues 511–514 (NKMD). The interval 547–549 (SAK) is G5.

The protein belongs to the TRAFAC class translation factor GTPase superfamily. Classic translation factor GTPase family. IF-2 subfamily.

Its subcellular location is the cytoplasm. One of the essential components for the initiation of protein synthesis. Protects formylmethionyl-tRNA from spontaneous hydrolysis and promotes its binding to the 30S ribosomal subunits. Also involved in the hydrolysis of GTP during the formation of the 70S ribosomal complex. The chain is Translation initiation factor IF-2 from Campylobacter curvus (strain 525.92).